The primary structure comprises 229 residues: NAD(P)H-quinone oxidoreductase subunit K, chloroplastic (229 aa).

[4Fe-4S] cluster-binding residues include Cys-43, Cys-44, Cys-108, and Cys-139.

Belongs to the complex I 20 kDa subunit family. NDH is composed of at least 16 different subunits, 5 of which are encoded in the nucleus. The cofactor is [4Fe-4S] cluster.

Its subcellular location is the plastid. The protein resides in the chloroplast thylakoid membrane. It catalyses the reaction a plastoquinone + NADH + (n+1) H(+)(in) = a plastoquinol + NAD(+) + n H(+)(out). The enzyme catalyses a plastoquinone + NADPH + (n+1) H(+)(in) = a plastoquinol + NADP(+) + n H(+)(out). In terms of biological role, NDH shuttles electrons from NAD(P)H:plastoquinone, via FMN and iron-sulfur (Fe-S) centers, to quinones in the photosynthetic chain and possibly in a chloroplast respiratory chain. The immediate electron acceptor for the enzyme in this species is believed to be plastoquinone. Couples the redox reaction to proton translocation, and thus conserves the redox energy in a proton gradient. In Aethionema cordifolium (Lebanon stonecress), this protein is NAD(P)H-quinone oxidoreductase subunit K, chloroplastic.